The following is a 270-amino-acid chain: ATP synthase subunit delta (270 aa).

The protein belongs to the ATPase delta chain family. F-type ATPases have 2 components, F(1) - the catalytic core - and F(0) - the membrane proton channel. F(1) has five subunits: alpha(3), beta(3), gamma(1), delta(1), epsilon(1). F(0) has three main subunits: a(1), b(2) and c(10-14). The alpha and beta chains form an alternating ring which encloses part of the gamma chain. F(1) is attached to F(0) by a central stalk formed by the gamma and epsilon chains, while a peripheral stalk is formed by the delta and b chains.

The protein resides in the cell membrane. Its function is as follows. F(1)F(0) ATP synthase produces ATP from ADP in the presence of a proton or sodium gradient. F-type ATPases consist of two structural domains, F(1) containing the extramembraneous catalytic core and F(0) containing the membrane proton channel, linked together by a central stalk and a peripheral stalk. During catalysis, ATP synthesis in the catalytic domain of F(1) is coupled via a rotary mechanism of the central stalk subunits to proton translocation. In terms of biological role, this protein is part of the stalk that links CF(0) to CF(1). It either transmits conformational changes from CF(0) to CF(1) or is implicated in proton conduction. The sequence is that of ATP synthase subunit delta from Kocuria rhizophila (strain ATCC 9341 / DSM 348 / NBRC 103217 / DC2201).